The chain runs to 288 residues: Acetyl-coenzyme A carboxylase carboxyl transferase subunit beta (288 aa).

One can recognise a CoA carboxyltransferase N-terminal domain in the interval 33-288 (LFSQCPGCKH…LVRLHGGSPR (256 aa)). Residues Cys37, Cys40, Cys55, and Cys58 each coordinate Zn(2+). A C4-type zinc finger spans residues 37 to 58 (CPGCKHTIYQKDLGSERICPHC).

The protein belongs to the AccD/PCCB family. Acetyl-CoA carboxylase is a heterohexamer composed of biotin carboxyl carrier protein (AccB), biotin carboxylase (AccC) and two subunits each of ACCase subunit alpha (AccA) and ACCase subunit beta (AccD). Zn(2+) serves as cofactor.

Its subcellular location is the cytoplasm. It carries out the reaction N(6)-carboxybiotinyl-L-lysyl-[protein] + acetyl-CoA = N(6)-biotinyl-L-lysyl-[protein] + malonyl-CoA. The protein operates within lipid metabolism; malonyl-CoA biosynthesis; malonyl-CoA from acetyl-CoA: step 1/1. Its function is as follows. Component of the acetyl coenzyme A carboxylase (ACC) complex. Biotin carboxylase (BC) catalyzes the carboxylation of biotin on its carrier protein (BCCP) and then the CO(2) group is transferred by the transcarboxylase to acetyl-CoA to form malonyl-CoA. This is Acetyl-coenzyme A carboxylase carboxyl transferase subunit beta from Streptococcus pneumoniae serotype 4 (strain ATCC BAA-334 / TIGR4).